The chain runs to 469 residues: UDP-N-acetylmuramate--L-alanine ligase (469 aa).

An ATP-binding site is contributed by 118 to 124 (GTHGKTT).

The protein belongs to the MurCDEF family.

The protein resides in the cytoplasm. It carries out the reaction UDP-N-acetyl-alpha-D-muramate + L-alanine + ATP = UDP-N-acetyl-alpha-D-muramoyl-L-alanine + ADP + phosphate + H(+). It participates in cell wall biogenesis; peptidoglycan biosynthesis. Functionally, cell wall formation. The protein is UDP-N-acetylmuramate--L-alanine ligase of Lachnoclostridium phytofermentans (strain ATCC 700394 / DSM 18823 / ISDg) (Clostridium phytofermentans).